The sequence spans 282 residues: Release factor glutamine methyltransferase (282 aa).

S-adenosyl-L-methionine is bound by residues Asp-141, Phe-169, and Asn-186. Position 186–189 (186–189 (NPPY)) interacts with substrate.

Belongs to the protein N5-glutamine methyltransferase family. PrmC subfamily.

The enzyme catalyses L-glutaminyl-[peptide chain release factor] + S-adenosyl-L-methionine = N(5)-methyl-L-glutaminyl-[peptide chain release factor] + S-adenosyl-L-homocysteine + H(+). In terms of biological role, methylates the class 1 translation termination release factors RF1/PrfA and RF2/PrfB on the glutamine residue of the universally conserved GGQ motif. In Mycoplasma mycoides subsp. mycoides SC (strain CCUG 32753 / NCTC 10114 / PG1), this protein is Release factor glutamine methyltransferase.